The sequence spans 425 residues: Serine--tRNA ligase (425 aa).

Threonine 232 to glutamate 234 is a binding site for L-serine. Residues arginine 263–glutamate 265 and valine 279 contribute to the ATP site. Residue glutamate 286 participates in L-serine binding. Residue glutamate 350–serine 353 coordinates ATP. Threonine 387 contributes to the L-serine binding site.

The protein belongs to the class-II aminoacyl-tRNA synthetase family. Type-1 seryl-tRNA synthetase subfamily. As to quaternary structure, homodimer. The tRNA molecule binds across the dimer.

Its subcellular location is the cytoplasm. The catalysed reaction is tRNA(Ser) + L-serine + ATP = L-seryl-tRNA(Ser) + AMP + diphosphate + H(+). It catalyses the reaction tRNA(Sec) + L-serine + ATP = L-seryl-tRNA(Sec) + AMP + diphosphate + H(+). It functions in the pathway aminoacyl-tRNA biosynthesis; selenocysteinyl-tRNA(Sec) biosynthesis; L-seryl-tRNA(Sec) from L-serine and tRNA(Sec): step 1/1. Its function is as follows. Catalyzes the attachment of serine to tRNA(Ser). Is also able to aminoacylate tRNA(Sec) with serine, to form the misacylated tRNA L-seryl-tRNA(Sec), which will be further converted into selenocysteinyl-tRNA(Sec). The chain is Serine--tRNA ligase from Methanoculleus marisnigri (strain ATCC 35101 / DSM 1498 / JR1).